The following is a 57-amino-acid chain: Large ribosomal subunit protein bL32 (57 aa).

The protein belongs to the bacterial ribosomal protein bL32 family.

This Halothermothrix orenii (strain H 168 / OCM 544 / DSM 9562) protein is Large ribosomal subunit protein bL32.